The chain runs to 366 residues: MAGSVFGNIFKISTWGESHGEGLGVVIDGCPAGLPLCEKDIQEQLDRRKPGQSKFTTPRKEDDEVHILSGVFEGKTTGTPISLAVYNKTQRSADYSEIANYYRPGHADYTFDEKFGFRDYRGGGRSSGRETIGRVAAGAIAMKILKELGINITAYAKEIGGIGIDYDKFDIAERDNNAFNMPDKEAAEKVKAFAESKMSVGDSIGGVIECRVTGMMTGIGNPTFEKLDANLAKAIMSIGAVKGFEIGDGFEAAKVTGKYNNDEFVMKDGRVGKLTNHSGGVLGGISDGDEIVFRAAVKPTPSISALQETVNKQGEDIEVSIKGRHDPMIVPRAVVVVEAMTALTLVDLIFDNMTARMDRVKEFYRK.

Arg48 is an NADP(+) binding site. Residues 125–127 (RSS), Gly283, 298–302 (KPTPS), and Arg324 each bind FMN.

Belongs to the chorismate synthase family. In terms of assembly, homotetramer. The cofactor is FMNH2.

The enzyme catalyses 5-O-(1-carboxyvinyl)-3-phosphoshikimate = chorismate + phosphate. It participates in metabolic intermediate biosynthesis; chorismate biosynthesis; chorismate from D-erythrose 4-phosphate and phosphoenolpyruvate: step 7/7. Catalyzes the anti-1,4-elimination of the C-3 phosphate and the C-6 proR hydrogen from 5-enolpyruvylshikimate-3-phosphate (EPSP) to yield chorismate, which is the branch point compound that serves as the starting substrate for the three terminal pathways of aromatic amino acid biosynthesis. This reaction introduces a second double bond into the aromatic ring system. The protein is Chorismate synthase of Lachnospira eligens (strain ATCC 27750 / DSM 3376 / VPI C15-48 / C15-B4) (Eubacterium eligens).